Reading from the N-terminus, the 194-residue chain is Large ribosomal subunit protein bL25 (194 aa).

It belongs to the bacterial ribosomal protein bL25 family. CTC subfamily. In terms of assembly, part of the 50S ribosomal subunit; part of the 5S rRNA/L5/L18/L25 subcomplex. Contacts the 5S rRNA. Binds to the 5S rRNA independently of L5 and L18.

In terms of biological role, this is one of the proteins that binds to the 5S RNA in the ribosome where it forms part of the central protuberance. The polypeptide is Large ribosomal subunit protein bL25 (Parabacteroides distasonis (strain ATCC 8503 / DSM 20701 / CIP 104284 / JCM 5825 / NCTC 11152)).